The sequence spans 105 residues: Vacuolar ATPase assembly integral membrane protein VMA21 homolog (105 aa).

The disordered stretch occupies residues 1 to 26 (MSTKNKKAAGGNGVAPKQTRQQSHDS). Residues 1 to 36 (MSTKNKKAAGGNGVAPKQTRQQSHDSQDYSSFKTVL) lie on the Cytoplasmic side of the membrane. A helical membrane pass occupies residues 37–57 (FYCMLIVFLPVLTFFVLKGFV). Topologically, residues 58-68 (LDQFLDISEVK) are lumenal. A helical membrane pass occupies residues 69–89 (VNIASAVGAVVALHIALGLYI). Residues 90–105 (YRAYFGAPGSKGSKTD) lie on the Cytoplasmic side of the membrane.

Belongs to the VMA21 family.

It localises to the endoplasmic reticulum membrane. Its subcellular location is the endoplasmic reticulum-Golgi intermediate compartment membrane. The protein resides in the cytoplasmic vesicle. The protein localises to the COPII-coated vesicle membrane. Required for the assembly of the V0 complex of the vacuolar ATPase (V-ATPase) in the endoplasmic reticulum. This is Vacuolar ATPase assembly integral membrane protein VMA21 homolog from Drosophila melanogaster (Fruit fly).